An 864-amino-acid chain; its full sequence is DNA mismatch repair protein MutS (864 aa).

607 to 614 (GPNMGGKS) lines the ATP pocket.

This sequence belongs to the DNA mismatch repair MutS family.

This protein is involved in the repair of mismatches in DNA. It is possible that it carries out the mismatch recognition step. This protein has a weak ATPase activity. This chain is DNA mismatch repair protein MutS, found in Neisseria gonorrhoeae (strain ATCC 700825 / FA 1090).